The sequence spans 560 residues: MRSDRIKKGFERAPHRSLLRATGLNDGDFEKPFIGIANSHIDIIPGHYYLQEYGRIAKDEIRKAGGVPFEFNTIGVDDGIAMGHEGMKYSLPSRELIADSIETVMNAHQLDALVCIPNCDKIVPGMLMGALRVNVPTVFVSGGPMKAGHLHDGTPIDLNTAFEAVGKRAQGQLTDAELYEIECQACPSGGSCSGMFTANSMNVLCEAMGVALPGNGTVLALTPEREALVRRAARRAVEIAADERFKLRNIANRDAIHNAMVVDMAMGGSSNTVLHMLAISREAGAPLSLRDIEEIAGKVSHIAKIAPSLATVHMEDIHRAGGVPAVLREAARRGGIVREGALTVTGETVGERIRDARTADPELIRPLENAYSPVGGLAVLFGNLAIEGAVVKTAGIQPSMRRFTGAAICFDSQDEAIAGIMGGKVKPGHFVVIRYEGPKGGPGMQEMLSPTSLIMGMGLGESVALVTDGRFSGATRGACVGHVSPEAAEGGVIGLVQDGDRITIDVEARALTVDVSDAELARRRAGFRPKRRDPGSSWLRRYAHLVTNAANGAVLRSTDL.

Asp78 lines the Mg(2+) pocket. Cys119 lines the [2Fe-2S] cluster pocket. Positions 120 and 121 each coordinate Mg(2+). An N6-carboxylysine modification is found at Lys121. Cys192 is a binding site for [2Fe-2S] cluster. A Mg(2+)-binding site is contributed by Glu446. Residue Ser472 is the Proton acceptor of the active site.

Belongs to the IlvD/Edd family. Homodimer. [2Fe-2S] cluster is required as a cofactor. Requires Mg(2+) as cofactor.

It catalyses the reaction (2R)-2,3-dihydroxy-3-methylbutanoate = 3-methyl-2-oxobutanoate + H2O. It carries out the reaction (2R,3R)-2,3-dihydroxy-3-methylpentanoate = (S)-3-methyl-2-oxopentanoate + H2O. The protein operates within amino-acid biosynthesis; L-isoleucine biosynthesis; L-isoleucine from 2-oxobutanoate: step 3/4. It participates in amino-acid biosynthesis; L-valine biosynthesis; L-valine from pyruvate: step 3/4. In terms of biological role, functions in the biosynthesis of branched-chain amino acids. Catalyzes the dehydration of (2R,3R)-2,3-dihydroxy-3-methylpentanoate (2,3-dihydroxy-3-methylvalerate) into 2-oxo-3-methylpentanoate (2-oxo-3-methylvalerate) and of (2R)-2,3-dihydroxy-3-methylbutanoate (2,3-dihydroxyisovalerate) into 2-oxo-3-methylbutanoate (2-oxoisovalerate), the penultimate precursor to L-isoleucine and L-valine, respectively. The sequence is that of Dihydroxy-acid dehydratase from Anaeromyxobacter dehalogenans (strain 2CP-1 / ATCC BAA-258).